The following is a 172-amino-acid chain: Single-stranded DNA-binding protein 2 (172 aa).

The SSB domain maps to 6–111 (VNKVILVGHI…VIVNVGGTMQ (106 aa)). The DNA-binding element occupies 55–61 (WHRVVVF). Positions 113 to 172 (LGRHNSQPQQEPQTPPTAAKGEGKAVKGAGNAAKGKNAAAPQQPPAQPDPAYDFDDDIPF) are disordered. Residues 119–153 (QPQQEPQTPPTAAKGEGKAVKGAGNAAKGKNAAAP) show a composition bias toward low complexity. The short motif at 167–172 (DDDIPF) is the Important for interaction with partner proteins element.

Homotetramer.

Functionally, plays an important role in DNA replication, recombination and repair. Binds to ssDNA and to an array of partner proteins to recruit them to their sites of action during DNA metabolism. The polypeptide is Single-stranded DNA-binding protein 2 (ssb2) (Salmonella typhimurium (strain LT2 / SGSC1412 / ATCC 700720)).